The chain runs to 452 residues: UPF0210 protein Daud_1353 (452 aa).

This sequence belongs to the UPF0210 family. In terms of assembly, homodimer.

This is UPF0210 protein Daud_1353 from Desulforudis audaxviator (strain MP104C).